The sequence spans 410 residues: UPF0761 membrane protein Csal_1895 (410 aa).

6 helical membrane-spanning segments follow: residues 43 to 63 (LFAVVPFMTVLYAMLSAIPSF), 99 to 119 (SLTLIGLMFLLVTAVMMMVTV), 139 to 159 (FLLYWAVLTLGPLLLGSGFLL), 180 to 200 (VAFLRLLPLTLSFTAFVFIYM), 212 to 232 (AVAGAGLAALALELAKGAFSL), and 247 to 267 (FAAVPLFLVWVFLSWAIVLVG).

It belongs to the UPF0761 family.

The protein resides in the cell inner membrane. The sequence is that of UPF0761 membrane protein Csal_1895 from Chromohalobacter salexigens (strain ATCC BAA-138 / DSM 3043 / CIP 106854 / NCIMB 13768 / 1H11).